The chain runs to 129 residues: Fluoride-specific ion channel FluC 2 (129 aa).

4 helical membrane passes run 3–23 (FLYVGVFGALGGMCRYAMNLW), 32–52 (ATLAVNLIGCFLLAFLMQFLA), 59–79 (LVILNGIGTGFIGAFTTFSAF), and 90–110 (GAWLFAVSYVLASFIGGLIMV). Na(+)-binding residues include Gly-71 and Thr-74.

The protein belongs to the fluoride channel Fluc/FEX (TC 1.A.43) family.

The protein localises to the cell membrane. The catalysed reaction is fluoride(in) = fluoride(out). With respect to regulation, na(+) is not transported, but it plays an essential structural role and its presence is essential for fluoride channel function. Functionally, fluoride-specific ion channel. Important for reducing fluoride concentration in the cell, thus reducing its toxicity. This chain is Fluoride-specific ion channel FluC 2, found in Listeria monocytogenes serotype 4b (strain F2365).